The chain runs to 1006 residues: Unconventional myosin-Id (1006 aa).

At alanine 2 the chain carries N-acetylalanine. A Myosin motor domain is found at 9–695; that stretch reads FGKADFVLMD…TLFTLEELRA (687 aa). 102–109 serves as a coordination point for ATP; sequence GESGAGKT. Position 200 is a phosphoserine (serine 200). Residue tyrosine 536 is modified to Phosphotyrosine. Residues 572–594 form an actin-binding region; that stretch reads MIALVDNLASKEPYYVRCIKPND. 2 IQ domains span residues 699–719 and 721–741; these read VRIV…MRYK and TKAA…SYIH. Residues 812-1005 enclose the TH1 domain; it reads GQRADLGLQR…RSGFILSVPG (194 aa).

It belongs to the TRAFAC class myosin-kinesin ATPase superfamily. Myosin family. In terms of assembly, interacts (via the two IQ motifs) with calmodulin. Binds an additional calmodulin chain via a third, C-terminal region. Interacts with F-actin.

It localises to the cytoplasm. The protein resides in the perikaryon. It is found in the cell projection. The protein localises to the dendrite. Its subcellular location is the early endosome. It localises to the cell cortex. In terms of biological role, unconventional myosin that functions as actin-based motor protein with ATPase activity. Plays a role in endosomal protein trafficking, and especially in the transfer of cargo proteins from early to recycling endosomes. Required for normal planar cell polarity in ciliated tracheal cells, for normal rotational polarity of cilia, and for coordinated, unidirectional ciliary movement in the trachea. Required for normal, polarized cilia organization in brain ependymal epithelial cells. The protein is Unconventional myosin-Id (MYO1D) of Bos taurus (Bovine).